The following is an 859-amino-acid chain: Autoinducer 2 sensor kinase/phosphatase LuxQ (859 aa).

A run of 2 helical transmembrane segments spans residues 15-35 (ATLITKIIILVLAPIILGIFI) and 280-300 (IQHILAMLASIIGMIMIALMS). The Histidine kinase domain occupies 489–711 (KMSHEIRTPI…TFVITLPVKD (223 aa)). Histidine 492 is modified (phosphohistidine; by autocatalysis). Residues 736-851 (KVLLVEDNHT…ALHEAFVDFK (116 aa)) form the Response regulatory domain. Residue aspartate 785 is modified to 4-aspartylphosphate.

Binds the complex formed by AI-2 and LuxP.

Its subcellular location is the cell inner membrane. The catalysed reaction is ATP + protein L-histidine = ADP + protein N-phospho-L-histidine.. Functionally, at low cell density, in absence of AI-2 (autoinducer 2), LuxQ has a kinase activity and autophosphorylates on a histidine residue. The phosphoryl group is then transferred to an aspartate residue in the response regulator domain. The phosphoryl group is transferred to LuxU, and ultimately to LuxO. At high cell density, in the presence of AI-2, the kinase activity is inactivated, and the response regulator domain has a phosphatase activity. This is Autoinducer 2 sensor kinase/phosphatase LuxQ (luxQ) from Vibrio harveyi (Beneckea harveyi).